The following is a 273-amino-acid chain: Manganese catalase (273 aa).

Glu35 is a Mn(2+) binding site. Positions 57 and 61 each coordinate Ca(2+). Mn(2+) contacts are provided by Glu66, His69, Glu149, and His182. 3 residues coordinate Ca(2+): Asn220, Ser222, and Gly224. The disordered stretch occupies residues 254–273 (EKPELKPAPPCVHNTLPGRE).

The protein belongs to the manganese catalase family. In terms of assembly, homohexamer. Requires Ca(2+) as cofactor. Mn(2+) is required as a cofactor.

It catalyses the reaction 2 H2O2 = O2 + 2 H2O. With respect to regulation, inhibited in the presence of EDTA. Resistant to inhibition by sodium azide. Catalyzes the decomposition of hydrogen peroxide into water and oxygen. No significant activity could be detected with any of the other tested substrates, including glutathione, pyrogallol, NADH, NADPH and o-dianisidine. This Bacillus subtilis protein is Manganese catalase.